A 447-amino-acid polypeptide reads, in one-letter code: N-succinylarginine dihydrolase (447 aa).

Substrate-binding positions include 19-28, Asn-110, and 137-138; these read AGLSFGNEAS and HR. Residue Glu-174 is part of the active site. Arg-212 provides a ligand contact to substrate. His-248 is an active-site residue. Asp-250 and Asn-359 together coordinate substrate. Catalysis depends on Cys-365, which acts as the Nucleophile.

It belongs to the succinylarginine dihydrolase family. Homodimer.

The catalysed reaction is N(2)-succinyl-L-arginine + 2 H2O + 2 H(+) = N(2)-succinyl-L-ornithine + 2 NH4(+) + CO2. It functions in the pathway amino-acid degradation; L-arginine degradation via AST pathway; L-glutamate and succinate from L-arginine: step 2/5. Its function is as follows. Catalyzes the hydrolysis of N(2)-succinylarginine into N(2)-succinylornithine, ammonia and CO(2). This Escherichia coli O7:K1 (strain IAI39 / ExPEC) protein is N-succinylarginine dihydrolase.